The sequence spans 209 residues: Small ribosomal subunit protein uS5 (209 aa).

The segment covering 1 to 11 has biased composition (polar residues); it reads MTQPNTQTTPN. The tract at residues 1–55 is disordered; that stretch reads MTQPNTQTTPNDVPAAAEGQQEQQQQQRRGGGRERRGGGRRGDRRGQERDSEWQE. Positions 18 to 28 are enriched in low complexity; the sequence is EGQQEQQQQQR. A compositionally biased stretch (basic and acidic residues) spans 31 to 55; that stretch reads GGRERRGGGRRGDRRGQERDSEWQE. The 64-residue stretch at 53-116 folds into the S5 DRBM domain; sequence WQERVVQIRR…ADGKKHLVKV (64 aa).

It belongs to the universal ribosomal protein uS5 family. Part of the 30S ribosomal subunit. Contacts proteins S4 and S8.

In terms of biological role, with S4 and S12 plays an important role in translational accuracy. Its function is as follows. Located at the back of the 30S subunit body where it stabilizes the conformation of the head with respect to the body. The polypeptide is Small ribosomal subunit protein uS5 (Prochlorococcus marinus (strain MIT 9313)).